The primary structure comprises 676 residues: DNA ligase (676 aa).

Residues 39-43 (DYVYD), 88-91 (SLND), and Glu118 contribute to the NAD(+) site. Lys120 functions as the N6-AMP-lysine intermediate in the catalytic mechanism. 4 residues coordinate NAD(+): Arg141, Glu175, Lys291, and Lys315. Residues Cys409, Cys412, Cys427, and Cys432 each contribute to the Zn(2+) site. The BRCT domain occupies 595–676 (EVESPFKDKT…MVDALDASHF (82 aa)).

It belongs to the NAD-dependent DNA ligase family. LigA subfamily. The cofactor is Mg(2+). It depends on Mn(2+) as a cofactor.

It carries out the reaction NAD(+) + (deoxyribonucleotide)n-3'-hydroxyl + 5'-phospho-(deoxyribonucleotide)m = (deoxyribonucleotide)n+m + AMP + beta-nicotinamide D-nucleotide.. In terms of biological role, DNA ligase that catalyzes the formation of phosphodiester linkages between 5'-phosphoryl and 3'-hydroxyl groups in double-stranded DNA using NAD as a coenzyme and as the energy source for the reaction. It is essential for DNA replication and repair of damaged DNA. The protein is DNA ligase of Enterococcus faecalis (strain ATCC 700802 / V583).